Consider the following 147-residue polypeptide: Arginine vasopressin-induced protein 1 (147 aa).

2 disordered regions span residues 1 to 24 and 104 to 147; these read MGTPASVVSEPPPWQAPIEARGRK and LANP…QIRH. Polar residues predominate over residues 105 to 119; the sequence is ANPQSATETASSEQY. Residues 121–134 show a composition bias toward basic residues; the sequence is HSRKKSARIRRNWR. The segment covering 137-147 has biased composition (polar residues); it reads GPTSYLHQIRH.

In terms of biological role, may be involved in MAP kinase activation, epithelial sodium channel (ENaC) down-regulation and cell cycling. The polypeptide is Arginine vasopressin-induced protein 1 (AVPI1) (Homo sapiens (Human)).